A 409-amino-acid polypeptide reads, in one-letter code: uncharacterized protein (409 aa).

Helical transmembrane passes span 20–40, 283–303, 344–364, and 372–392; these read ILTM…VSML, FALL…IGVM, IGGI…TVIF, and IPAV…FGLL.

The protein belongs to the ABC-4 integral membrane protein family.

The protein localises to the cell membrane. This is an uncharacterized protein from Bacillus subtilis (strain 168).